Consider the following 283-residue polypeptide: Formamidopyrimidine-DNA glycosylase (283 aa).

The active-site Schiff-base intermediate with DNA is Pro2. Glu3 functions as the Proton donor in the catalytic mechanism. Catalysis depends on Lys60, which acts as the Proton donor; for beta-elimination activity. Residues His100, Arg119, and Arg164 each contribute to the DNA site. The FPG-type zinc finger occupies 249-283 (WVYGRENKPCRKCGVKILKAKVAGRGTHWCPNCQK). The active-site Proton donor; for delta-elimination activity is the Arg273.

Belongs to the FPG family. As to quaternary structure, monomer. Zn(2+) is required as a cofactor.

It catalyses the reaction Hydrolysis of DNA containing ring-opened 7-methylguanine residues, releasing 2,6-diamino-4-hydroxy-5-(N-methyl)formamidopyrimidine.. The catalysed reaction is 2'-deoxyribonucleotide-(2'-deoxyribose 5'-phosphate)-2'-deoxyribonucleotide-DNA = a 3'-end 2'-deoxyribonucleotide-(2,3-dehydro-2,3-deoxyribose 5'-phosphate)-DNA + a 5'-end 5'-phospho-2'-deoxyribonucleoside-DNA + H(+). In terms of biological role, involved in base excision repair of DNA damaged by oxidation or by mutagenic agents. Acts as a DNA glycosylase that recognizes and removes damaged bases. Has a preference for oxidized purines, such as 7,8-dihydro-8-oxoguanine (8-oxoG). Has AP (apurinic/apyrimidinic) lyase activity and introduces nicks in the DNA strand. Cleaves the DNA backbone by beta-delta elimination to generate a single-strand break at the site of the removed base with both 3'- and 5'-phosphates. The sequence is that of Formamidopyrimidine-DNA glycosylase from Prochlorococcus marinus (strain SARG / CCMP1375 / SS120).